The primary structure comprises 324 residues: Acetyl-coenzyme A carboxylase carboxyl transferase subunit alpha (324 aa).

Residues 37–291 (KLDKRLDRLK…QEYVLQEWVK (255 aa)) enclose the CoA carboxyltransferase C-terminal domain.

Belongs to the AccA family. In terms of assembly, acetyl-CoA carboxylase is a heterohexamer composed of biotin carboxyl carrier protein (AccB), biotin carboxylase (AccC) and two subunits each of ACCase subunit alpha (AccA) and ACCase subunit beta (AccD).

The protein resides in the cytoplasm. It carries out the reaction N(6)-carboxybiotinyl-L-lysyl-[protein] + acetyl-CoA = N(6)-biotinyl-L-lysyl-[protein] + malonyl-CoA. It participates in lipid metabolism; malonyl-CoA biosynthesis; malonyl-CoA from acetyl-CoA: step 1/1. Functionally, component of the acetyl coenzyme A carboxylase (ACC) complex. First, biotin carboxylase catalyzes the carboxylation of biotin on its carrier protein (BCCP) and then the CO(2) group is transferred by the carboxyltransferase to acetyl-CoA to form malonyl-CoA. The protein is Acetyl-coenzyme A carboxylase carboxyl transferase subunit alpha of Chlamydia trachomatis serovar L2 (strain ATCC VR-902B / DSM 19102 / 434/Bu).